Here is a 121-residue protein sequence, read N- to C-terminus: Basic phospholipase A2 3 (121 aa).

7 disulfide bridges follow: C26/C115, C28/C44, C43/C95, C49/C121, C50/C88, C57/C81, and C75/C86. The Ca(2+) site is built by Y27, G29, and G31. H47 is an active-site residue. Ca(2+) is bound at residue D48. D89 is an active-site residue.

This sequence belongs to the phospholipase A2 family. Group II subfamily. D49 sub-subfamily. Requires Ca(2+) as cofactor. As to expression, expressed by the venom gland.

It localises to the secreted. The enzyme catalyses a 1,2-diacyl-sn-glycero-3-phosphocholine + H2O = a 1-acyl-sn-glycero-3-phosphocholine + a fatty acid + H(+). PLA2 catalyzes the calcium-dependent hydrolysis of the 2-acyl groups in 3-sn-phosphoglycerides. The polypeptide is Basic phospholipase A2 3 (Daboia russelii (Russel's viper)).